Consider the following 130-residue polypeptide: Small ribosomal subunit protein uS9 (130 aa).

A disordered region spans residues 109–130 (RKKERKKYGQPGARAKFQYSKR).

It belongs to the universal ribosomal protein uS9 family.

This chain is Small ribosomal subunit protein uS9, found in Maridesulfovibrio salexigens (strain ATCC 14822 / DSM 2638 / NCIMB 8403 / VKM B-1763) (Desulfovibrio salexigens).